A 1714-amino-acid chain; its full sequence is Bifunctional glutamate/proline--tRNA ligase (1714 aa).

The tract at residues 166–191 is disordered; the sequence is DAKVKRSPQSSKEQTPAKTGERKQEG. Residues 170-754 are glutamate--tRNA ligase; that stretch reads KRSPQSSKEQ…ASELDSQISQ (585 aa). The segment covering 172–182 has biased composition (polar residues); sequence SPQSSKEQTPA. Residues 209–220 carry the 'HIGH' region motif; the sequence is PPEASGYLHIGH. Residues 438-442 carry the 'KMSKS' region motif; it reads VLSKR. Disordered stretches follow at residues 718–754, 791–817, and 943–962; these read PTSGLKVNAPDAKATKKASSPVSSSGQASELDSQISQ, GKDWKPGQTSASSAPVPAASSSSANDA, and GTTAPAPAAAPVKVKQEKNP. 2 stretches are compositionally biased toward low complexity: residues 734–746 and 800–817; these read KASSPVSSSGQAS and SASSAPVPAASSSSANDA. 5 WHEP-TRS domains span residues 744–800, 816–872, 890–946, 969–1025, and 1044–1100; these read QASE…GQTS, DAVS…GTVP, SVAQ…GTTA, TVNT…GTVA, and DVGS…DAKS. Residues 755–1201 are 6 X 57 AA approximate repeats; that stretch reads QGDLVRDLKS…KPAKPVKKEP (447 aa). Disordered regions lie at residues 1093-1119 and 1168-1210; these read DWTPDAKSEPAVVKKEASPVSMASPAK and FPVA…GAVK. A compositionally biased stretch (basic and acidic residues) spans 1094-1109; it reads WTPDAKSEPAVVKKEA. A Phosphoserine modification is found at serine 1110. Positions 1118–1174 constitute a WHEP-TRS 6 domain; it reads AKDELTQEINAQGEKVRAAKGNKAAKEVIDAEVAKLLALKAKYKEVTGTDFPVAGRG. Residues 1172–1181 are compositionally biased toward gly residues; it reads GRGGGGGGGS. The segment at 1207–1714 is proline--tRNA ligase; that stretch reads GAVKKQTRLG…KFYTLFGRSY (508 aa). Residues 1322–1324 and arginine 1353 each bind L-proline; that span reads TSE. Residues arginine 1353, glutamate 1355, arginine 1364, threonine 1365, glutamine 1438, and threonine 1441 each contribute to the ATP site. A Mg(2+)-binding site is contributed by glutamine 1438. Residue histidine 1443 coordinates L-proline. 2 residues coordinate ATP: threonine 1476 and arginine 1478. Positions 1648, 1653, and 1695 each coordinate Zn(2+).

The protein in the N-terminal section; belongs to the class-I aminoacyl-tRNA synthetase family. Glutamate--tRNA ligase type 2 subfamily. In the C-terminal section; belongs to the class-II aminoacyl-tRNA synthetase family. In terms of assembly, component of the multisynthetase complex which is comprised of a bifunctional glutamyl-prolyl-tRNA synthetase, the monospecific isoleucyl, leucyl, glutaminyl, methionyl, lysyl, arginyl, and aspartyl-tRNA synthetases as well as three auxiliary proteins, p18, p48 and p43.

It carries out the reaction tRNA(Glu) + L-glutamate + ATP = L-glutamyl-tRNA(Glu) + AMP + diphosphate. It catalyses the reaction tRNA(Pro) + L-proline + ATP = L-prolyl-tRNA(Pro) + AMP + diphosphate. Functionally, catalyzes the attachment of both L-glutamate and L-proline to their cognate tRNAs in a two-step reaction where the amino acid is first activated by ATP to form a covalent intermediate with AMP. Subsequently, the activated amino acid is transferred to the acceptor end of the cognate tRNA to form L-glutamyl-tRNA(Glu) and L-prolyl-tRNA(Pro). In Drosophila melanogaster (Fruit fly), this protein is Bifunctional glutamate/proline--tRNA ligase.